A 224-amino-acid chain; its full sequence is Fibronectin type III domain-containing protein 9 (224 aa).

The region spanning 1–101 (MNIEVGNISY…FHTLDKSPLA (101 aa)) is the Fibronectin type-III domain. A helical membrane pass occupies residues 113 to 133 (LWVLMAILLACFTAVLAFICL). The disordered stretch occupies residues 175 to 224 (LQGLPLVEMPRKNSRDGAELDPEANQDAPDAGALQRGGGDPPAILPHCGE). Basic and acidic residues predominate over residues 183–192 (MPRKNSRDGA).

The protein resides in the membrane. The protein is Fibronectin type III domain-containing protein 9 (FNDC9) of Homo sapiens (Human).